Consider the following 348-residue polypeptide: Dihydroorotase (348 aa).

Zn(2+) contacts are provided by His17 and His19. Substrate contacts are provided by residues 19 to 21 (HLR) and Asn45. Lys103, His140, and His178 together coordinate Zn(2+). Lys103 is subject to N6-carboxylysine. His140 contributes to the substrate binding site. A substrate-binding site is contributed by Leu223. Asp251 provides a ligand contact to Zn(2+). Asp251 is an active-site residue. Residues His255 and Ala267 each coordinate substrate.

Belongs to the metallo-dependent hydrolases superfamily. DHOase family. Class II DHOase subfamily. Homodimer. It depends on Zn(2+) as a cofactor.

It carries out the reaction (S)-dihydroorotate + H2O = N-carbamoyl-L-aspartate + H(+). It participates in pyrimidine metabolism; UMP biosynthesis via de novo pathway; (S)-dihydroorotate from bicarbonate: step 3/3. Catalyzes the reversible cyclization of carbamoyl aspartate to dihydroorotate. The sequence is that of Dihydroorotase from Escherichia coli O17:K52:H18 (strain UMN026 / ExPEC).